Reading from the N-terminus, the 180-residue chain is Alkyl hydroperoxide reductase AhpD (180 aa).

Catalysis depends on C131, which acts as the Proton donor. A disulfide bridge connects residues C131 and C134. The active-site Cysteine sulfenic acid (-SOH) intermediate is the C134.

The protein belongs to the AhpD family.

The catalysed reaction is N(6)-[(R)-dihydrolipoyl]-L-lysyl-[lipoyl-carrier protein] + a hydroperoxide = N(6)-[(R)-lipoyl]-L-lysyl-[lipoyl-carrier protein] + an alcohol + H2O. Its function is as follows. Antioxidant protein with alkyl hydroperoxidase activity. Required for the reduction of the AhpC active site cysteine residues and for the regeneration of the AhpC enzyme activity. This Hyphomonas neptunium (strain ATCC 15444) protein is Alkyl hydroperoxide reductase AhpD.